Here is a 178-residue protein sequence, read N- to C-terminus: Ribosome maturation factor RimM (178 aa).

One can recognise a PRC barrel domain in the interval 99 to 178 (EGDFYWHDLI…TIEVDWDAGF (80 aa)).

This sequence belongs to the RimM family. Binds ribosomal protein uS19.

It localises to the cytoplasm. An accessory protein needed during the final step in the assembly of 30S ribosomal subunit, possibly for assembly of the head region. Essential for efficient processing of 16S rRNA. May be needed both before and after RbfA during the maturation of 16S rRNA. It has affinity for free ribosomal 30S subunits but not for 70S ribosomes. The sequence is that of Ribosome maturation factor RimM from Mannheimia succiniciproducens (strain KCTC 0769BP / MBEL55E).